The following is a 441-amino-acid chain: Tubulin beta-1 chain (441 aa).

Residues Gln11, Glu69, Ser138, Gly142, Thr143, Gly144, Asn204, and Asn226 each contribute to the GTP site. Glu69 lines the Mg(2+) pocket.

Belongs to the tubulin family. As to quaternary structure, dimer of alpha and beta chains. A typical microtubule is a hollow water-filled tube with an outer diameter of 25 nm and an inner diameter of 15 nM. Alpha-beta heterodimers associate head-to-tail to form protofilaments running lengthwise along the microtubule wall with the beta-tubulin subunit facing the microtubule plus end conferring a structural polarity. Microtubules usually have 13 protofilaments but different protofilament numbers can be found in some organisms and specialized cells. Mg(2+) serves as cofactor. Expressed primarily in touch receptor neurons.

The protein localises to the cytoplasm. Its subcellular location is the cytoskeleton. In terms of biological role, TTubulin is the major constituent of microtubules, a cylinder consisting of laterally associated linear protofilaments composed of alpha- and beta-tubulin heterodimers. Microtubules grow by the addition of GTP-tubulin dimers to the microtubule end, where a stabilizing cap forms. Below the cap, tubulin dimers are in GDP-bound state, owing to GTPase activity of alpha-tubulin. Plays a role in mechanosensory transduction (touch sensitivity). Its function is as follows. Mec-7 beta-tubulin is required for the production of 15-protofilament microtubules. The polypeptide is Tubulin beta-1 chain (mec-7) (Caenorhabditis elegans).